We begin with the raw amino-acid sequence, 348 residues long: Sulfate/thiosulfate import ATP-binding protein CysA (348 aa).

Residues 3–237 (IRIQELCKQF…PSSPFVYSFV (235 aa)) enclose the ABC transporter domain. 35-42 (GPSGSGKT) provides a ligand contact to ATP.

The protein belongs to the ABC transporter superfamily. Sulfate/tungstate importer (TC 3.A.1.6) family. The complex is composed of two ATP-binding proteins (CysA), two transmembrane proteins (CysT and CysW) and a solute-binding protein (CysP).

Its subcellular location is the cell inner membrane. The catalysed reaction is sulfate(out) + ATP + H2O = sulfate(in) + ADP + phosphate + H(+). The enzyme catalyses thiosulfate(out) + ATP + H2O = thiosulfate(in) + ADP + phosphate + H(+). Its function is as follows. Part of the ABC transporter complex CysAWTP involved in sulfate/thiosulfate import. Responsible for energy coupling to the transport system. This Xylella fastidiosa (strain 9a5c) protein is Sulfate/thiosulfate import ATP-binding protein CysA.